The primary structure comprises 272 residues: Phosphatidylglycerol--prolipoprotein diacylglyceryl transferase (272 aa).

4 helical membrane passes run 15–35 (LGPL…LVLF), 53–73 (AFAV…WHVV), 94–114 (GLGF…IAKI), and 117–137 (VPPF…LCFA). R138 contacts a 1,2-diacyl-sn-glycero-3-phospho-(1'-sn-glycerol). 3 consecutive transmembrane segments (helical) span residues 174–194 (FHPI…ILLV), 199–219 (VFVK…VLYG), and 237–257 (FGLD…VLIA).

The protein belongs to the Lgt family.

It is found in the cell membrane. The enzyme catalyses L-cysteinyl-[prolipoprotein] + a 1,2-diacyl-sn-glycero-3-phospho-(1'-sn-glycerol) = an S-1,2-diacyl-sn-glyceryl-L-cysteinyl-[prolipoprotein] + sn-glycerol 1-phosphate + H(+). It participates in protein modification; lipoprotein biosynthesis (diacylglyceryl transfer). In terms of biological role, catalyzes the transfer of the diacylglyceryl group from phosphatidylglycerol to the sulfhydryl group of the N-terminal cysteine of a prolipoprotein, the first step in the formation of mature lipoproteins. The chain is Phosphatidylglycerol--prolipoprotein diacylglyceryl transferase from Tropheryma whipplei (strain TW08/27) (Whipple's bacillus).